The following is a 189-amino-acid chain: Peptidyl-tRNA hydrolase (189 aa).

Position 14 (Tyr-14) interacts with tRNA. His-19 acts as the Proton acceptor in catalysis. TRNA is bound by residues Tyr-64, Asn-66, and Asn-112.

This sequence belongs to the PTH family. Monomer.

Its subcellular location is the cytoplasm. It carries out the reaction an N-acyl-L-alpha-aminoacyl-tRNA + H2O = an N-acyl-L-amino acid + a tRNA + H(+). Hydrolyzes ribosome-free peptidyl-tRNAs (with 1 or more amino acids incorporated), which drop off the ribosome during protein synthesis, or as a result of ribosome stalling. Its function is as follows. Catalyzes the release of premature peptidyl moieties from peptidyl-tRNA molecules trapped in stalled 50S ribosomal subunits, and thus maintains levels of free tRNAs and 50S ribosomes. The chain is Peptidyl-tRNA hydrolase from Clostridium botulinum (strain ATCC 19397 / Type A).